An 80-amino-acid polypeptide reads, in one-letter code: Putative defensin-like protein 23 (80 aa).

The signal sequence occupies residues 1-25 (MTTTMKIMSFAMLLVLLFSIDVVEG). Intrachain disulfides connect cysteine 31–cysteine 80, cysteine 41–cysteine 66, cysteine 50–cysteine 76, and cysteine 54–cysteine 78.

Belongs to the DEFL family.

Its subcellular location is the secreted. This chain is Putative defensin-like protein 23, found in Arabidopsis thaliana (Mouse-ear cress).